The following is a 743-amino-acid chain: 1,4-alpha-glucan branching enzyme GlgB (743 aa).

The active-site Nucleophile is Asp416. Glu469 serves as the catalytic Proton donor.

The protein belongs to the glycosyl hydrolase 13 family. GlgB subfamily. As to quaternary structure, monomer.

The enzyme catalyses Transfers a segment of a (1-&gt;4)-alpha-D-glucan chain to a primary hydroxy group in a similar glucan chain.. The protein operates within glycan biosynthesis; glycogen biosynthesis. Catalyzes the formation of the alpha-1,6-glucosidic linkages in glycogen by scission of a 1,4-alpha-linked oligosaccharide from growing alpha-1,4-glucan chains and the subsequent attachment of the oligosaccharide to the alpha-1,6 position. The sequence is that of 1,4-alpha-glucan branching enzyme GlgB from Shewanella baltica (strain OS223).